A 252-amino-acid chain; its full sequence is uncharacterized protein (252 aa).

The protein localises to the plastid. It localises to the chloroplast. This is an uncharacterized protein from Guillardia theta (Cryptophyte).